The sequence spans 193 residues: Xanthine phosphoribosyltransferase (193 aa).

Xanthine contacts are provided by leucine 20 and asparagine 27. 128–132 contributes to the 5-phospho-alpha-D-ribose 1-diphosphate binding site; sequence ANGDA. Xanthine is bound at residue lysine 156.

The protein belongs to the purine/pyrimidine phosphoribosyltransferase family. Xpt subfamily. As to quaternary structure, homodimer.

It localises to the cytoplasm. The catalysed reaction is XMP + diphosphate = xanthine + 5-phospho-alpha-D-ribose 1-diphosphate. The protein operates within purine metabolism; XMP biosynthesis via salvage pathway; XMP from xanthine: step 1/1. In terms of biological role, converts the preformed base xanthine, a product of nucleic acid breakdown, to xanthosine 5'-monophosphate (XMP), so it can be reused for RNA or DNA synthesis. The polypeptide is Xanthine phosphoribosyltransferase (Staphylococcus saprophyticus subsp. saprophyticus (strain ATCC 15305 / DSM 20229 / NCIMB 8711 / NCTC 7292 / S-41)).